A 2426-amino-acid polypeptide reads, in one-letter code: Protein SON (2426 aa).

N-acetylalanine is present on A2. An N6-acetyllysine modification is found at K16. Residues 24-42 (LSSGRNEGQLNGETNTPIE) are compositionally biased toward polar residues. The interval 24–56 (LSSGRNEGQLNGETNTPIEGNQAGDAAASARSL) is disordered. A Glycyl lysine isopeptide (Lys-Gly) (interchain with G-Cter in SUMO2) cross-link involves residue K64. A compositionally biased stretch (basic and acidic residues) spans 77–88 (LRYKPDLKEGSR). The tract at residues 77–155 (LRYKPDLKEG…GNIDLESDSF (79 aa)) is disordered. The residue at position 94 (S94) is a Phosphoserine. Basic residues predominate over residues 106–130 (KKSKKHKKHKNKKKKKKKEKEKKYK). Positions 131-146 (RQPEESESKTKSHDDG) are enriched in basic and acidic residues. Phosphoserine is present on residues S142, S152, S154, S160, and S283. N6-acetyllysine is present on K288. A disordered region spans residues 305-328 (TLVVSSETPTEVYPEPSTSTTMDF). T400 carries the post-translational modification Phosphothreonine. A disordered region spans residues 406–442 (PGPSATPVPELPGPLSTPVPELPGPPATAVPELPGPS). Over residues 409-442 (SATPVPELPGPLSTPVPELPGPPATAVPELPGPS) the composition is skewed to pro residues. Residues 726 to 895 (LASNTMDSQM…LASGTMDAQM (170 aa)) form a 17 X 10 AA tandem repeats of L-A-[ST]-[NSG]-[TS]-MDSQM region. Residues 912–988 (DPYRLAQDPY…IAPRPYRLAP (77 aa)) are 11 X 7 AA tandem repeats of [DR]-P-Y-R-[LI][AG][QHP]. R950 is subject to Omega-N-methylarginine. Position 959 is a phosphothreonine (T959). S998 carries the post-translational modification Phosphoserine. Tandem repeats lie at residues 1006-1011 (ERSMMS), 1014-1019 (ERSMMS), 1021-1026 (ERSMMS), 1030-1035 (ERSMMS), 1038-1043 (ERSMMS), 1046-1051 (ERSMMS), 1055-1060 (ERSMMS), 1063-1068 (ERSMMS), 1071-1076 (ERSMMS), 1080-1085 (DRSMMS), 1089-1094 (DRSMMS), 1100-1105 (DRSMMS), 1111-1116 (DRSMMS), and 1121-1126 (DRSMMS). The 14 X 6 AA repeats of [ED]-R-S-M-M-S stretch occupies residues 1006–1126 (ERSMMSSYER…SYTADRSMMS (121 aa)). Residue R1007 is modified to Asymmetric dimethylarginine. R1022 is subject to Asymmetric dimethylarginine. 2 positions are modified to phosphoserine: S1035 and S1043. Phosphoserine occurs at positions 1060 and 1068. Phosphoserine is present on S1082. Residues 1144–1236 (YMVPPLPPEE…PTDYSVSASD (93 aa)) are disordered. A 3 X 11 AA tandem repats of P-P-L-P-P-E-E-P-P-[TME]-[MTG] region spans residues 1147-1179 (PPLPPEEPPTMPPLPPEEPPMTPPLPPEEPPEG). Pro residues predominate over residues 1147 to 1180 (PPLPPEEPPTMPPLPPEEPPMTPPLPPEEPPEGP). The span at 1186–1196 (QSALTAENTWP) shows a compositional bias: polar residues. Positions 1198 to 1224 (EVPSSPSEESVSQPEPPVSQSEISEPS) are enriched in low complexity. Residues 1359–1390 (VLESSAVTVLESSTVTVLESSTVTVLEPSVVT) are 4 X 8 AA tandem repeats of V-L-E-SS-[AVT]-VT. Phosphoserine is present on residues S1556 and S1651. Positions 1645–1722 (TSPSGGSEAD…KETLPDSGFS (78 aa)) are disordered. Residues 1677 to 1689 (KDTEEPLPVKESD) show a composition bias toward basic and acidic residues. 8 positions are modified to phosphoserine: S1697, S1701, S1747, S1759, S1766, S1769, S1782, and S1783. Residues 1754–2054 (GPLLASDVGR…RSPKRLTDLD (301 aa)) are disordered. 3 stretches are compositionally biased toward basic and acidic residues: residues 1790-1801 (YEIFVKVKDTHE), 1809-1822 (RDKGEKEKKRDSSL), and 1830-1845 (KSSEHKSRKRTSESRS). Composition is skewed to basic residues over residues 1846 to 1909 (RARK…RKRS) and 1917 to 1948 (TVRARSRTPSRRSRSHTPSRRRRSRSVGRRRS). 9 tandem repeats follow at residues 1925–1931 (PSRRSRS), 1934–1952 (PSRRRRSRSVGRRRSFSIS), 1953–1959 (PSRRSRT), 1960–1966 (PSRRSRT), 1967–1973 (PSRRSRT), 1974–1980 (PSRRSRT), 1981–1987 (PSRRSRT), 1988–1994 (PSRRSRT), and 1995–2013 (PSRRRRSRSVVRRRSFSIS). Residues 1925 to 1994 (PSRRSRSHTP…SRTPSRRSRT (70 aa)) are 7 X 7 AA repeats of P-S-R-R-S-R-[TS]. Positions 1934–2013 (PSRRRRSRSV…VVRRRSFSIS (80 aa)) are 2 X 19 AA repeats of P-S-R-R-R-R-S-R-S-V-V-R-R-R-S-F-S-I-S. Phosphoserine is present on residues S1948, S1950, and S1952. Residues 1955-2009 (RRSRTPSRRSRTPSRRSRTPSRRSRTPSRRSRTPSRRSRTPSRRRRSRSVVRRRS) show a composition bias toward basic residues. 5 positions are modified to phosphoserine: S2009, S2011, S2013, S2029, and S2031. Positions 2013-2039 (SPVRLRRSRTPLRRRFSRSPIRRKRSR) are 3 X tandem repeats of [ST]-P-[VLI]-R-[RL]-[RK]-[RF]-S-R. Basic residues predominate over residues 2016–2038 (RLRRSRTPLRRRFSRSPIRRKRS). Positions 2039 to 2054 (RSSERGRSPKRLTDLD) are enriched in basic and acidic residues. Position 2055 is an N6-acetyllysine; alternate (K2055). K2055 is covalently cross-linked (Glycyl lysine isopeptide (Lys-Gly) (interchain with G-Cter in SUMO2); alternate). Residue K2092 forms a Glycyl lysine isopeptide (Lys-Gly) (interchain with G-Cter in SUMO2) linkage. Residue S2129 is modified to Phosphoserine. K2149 participates in a covalent cross-link: Glycyl lysine isopeptide (Lys-Gly) (interchain with G-Cter in SUMO2). T2163 is subject to Phosphothreonine. Positions 2200-2220 (KNGEENKDDDNVFSSNLPSEP) are disordered. Position 2238 is a phosphoserine (S2238). A G-patch domain is found at 2305–2351 (TGGMGAVLMRKMGWREGEGLGKNKEGNKEPILVDFKTDRKGLVAVGE). Positions 2371–2426 (HPVSALMEICNKRRWQPPEFLLVHDSGPDHRKHFLFRVLRNGALTRPNCMFFLNRY) constitute a DRBM domain.

As to quaternary structure, interacts with SRSF2. Associates with the spliceosome. Interacts with the AML1-MTG8 (AML1-ETO) fusion protein, possibly leading to trigger signals inhibiting leukemogenesis. Interacts with USH1G. In terms of tissue distribution, widely expressed, with the higher expression seen in leukocyte and heart.

The protein localises to the nucleus speckle. In terms of biological role, RNA-binding protein that acts as a mRNA splicing cofactor by promoting efficient splicing of transcripts that possess weak splice sites. Specifically promotes splicing of many cell-cycle and DNA-repair transcripts that possess weak splice sites, such as TUBG1, KATNB1, TUBGCP2, AURKB, PCNT, AKT1, RAD23A, and FANCG. Probably acts by facilitating the interaction between Serine/arginine-rich proteins such as SRSF2 and the RNA polymerase II. Also binds to DNA; binds to the consensus DNA sequence: 5'-GA[GT]AN[CG][AG]CC-3'. May indirectly repress hepatitis B virus (HBV) core promoter activity and transcription of HBV genes and production of HBV virions. Essential for correct RNA splicing of multiple genes critical for brain development, neuronal migration and metabolism, including TUBG1, FLNA, PNKP, WDR62, PSMD3, PCK2, PFKL, IDH2, and ACY1. The protein is Protein SON (SON) of Homo sapiens (Human).